A 179-amino-acid polypeptide reads, in one-letter code: Large ribosomal subunit protein uL6 (179 aa).

This sequence belongs to the universal ribosomal protein uL6 family. In terms of assembly, part of the 50S ribosomal subunit.

This protein binds to the 23S rRNA, and is important in its secondary structure. It is located near the subunit interface in the base of the L7/L12 stalk, and near the tRNA binding site of the peptidyltransferase center. This chain is Large ribosomal subunit protein uL6, found in Parasynechococcus marenigrum (strain WH8102).